The sequence spans 175 residues: ATP synthase subunit d, mitochondrial (175 aa).

Residue Ser2 is modified to N-acetylserine.

As to quaternary structure, F-type ATP synthases have 2 components, the catalytic core F(1) and the membrane-embedded component F(0), linked together by a central stalk and a peripheral stalk. The central stalk, also called rotor shaft, is often seen as part of F(1). The peripheral stalk is seen as part of F(0). F(0) contains the membrane channel next to the rotor. F-type ATP synthases form dimers but each monomer functions independently in ATP generation. The dimer consists of 18 different polypeptides: ATP1 (subunit alpha, part of F(1), 3 molecules per monomer), ATP2 (subunit beta, part of F(1), 3 molecules per monomer), ATP3 (subunit gamma, part of the central stalk), ATP4 (subunit b, part of the peripheral stalk), ATP5/OSCP (subunit 5/OSCP, part of the peripheral stalk), ATP6 (subunit a, part of the peripheral stalk), ATP7 (subunit d, part of the peripheral stalk), ATP8 (subunit 8, part of the peripheral stalk), OLI1 (subunit c, part of the rotor, 10 molecules per monomer), ATP14 (subunit h, part of the peripheral stalk), ATP15 (subunit epsilon, part of the central stalk), ATP16 (subunit delta, part of the central stalk), ATP17 (subunit f, part of the peripheral stalk), ATP18 (subunit i/j, part of the peripheral stalk). Dimer-specific subunits are ATP19 (subunit k, at interface between monomers), ATP20 (subunit g, at interface between monomers), TIM11 (subunit e, at interface between monomers). Also contains subunit L.

It localises to the mitochondrion inner membrane. In terms of biological role, mitochondrial membrane ATP synthase (F(1)F(0) ATP synthase or Complex V) produces ATP from ADP in the presence of a proton gradient across the membrane which is generated by electron transport complexes of the respiratory chain. F-type ATP synthases consist of two structural domains, F(1) - containing the extramembraneous catalytic core, and F(0) - containing the membrane proton channel, linked together by a central stalk and a peripheral stalk. During catalysis, ATP synthesis in the catalytic domain of F(1) is coupled via a rotary mechanism of the central stalk subunits to proton translocation. Part of the complex F(0) domain and the peripheral stalk, which acts as a stator to hold the catalytic alpha/ATP1(3)beta/ATP2(3) subcomplex and subunit a/ATP6 static relative to the rotary elements. This is ATP synthase subunit d, mitochondrial from Pichia angusta (Yeast).